A 162-amino-acid polypeptide reads, in one-letter code: UPF0114 protein Sfri_3655 (162 aa).

The next 3 membrane-spanning stretches (helical) occupy residues 15–35, 53–73, and 136–156; these read IMAPIYLGLSLILFALGIKFF, LVLITLSLIDITLVGGLLIMV, and IMWYLLIHITFVLSAFAMGYL.

This sequence belongs to the UPF0114 family.

Its subcellular location is the cell membrane. The sequence is that of UPF0114 protein Sfri_3655 from Shewanella frigidimarina (strain NCIMB 400).